Here is a 275-residue protein sequence, read N- to C-terminus: T cell receptor alpha chain MC.7.G5 (275 aa).

The first 21 residues, 1 to 21 (MACPGFLWALVISTCLEFSMA), serve as a signal peptide directing secretion. In terms of domain architecture, Ig-like V-type spans 22–116 (QTVTQSQPEM…AAMYFCAYRS (95 aa)). Residues 22–116 (QTVTQSQPEM…AAMYFCAYRS (95 aa)) are t cell receptor alpha variable 38-2DV8. Cysteine 43 and cysteine 112 are oxidised to a cystine. The CDR1 stretch occupies residues 47-53 (TSESDYY). The interval 71–81 (QEAYKQQNATE) is CDR2. Asparagine 78 carries an N-linked (GlcNAc...) asparagine glycan. Positions 112–124 (CAYRSAVNARLMF) are CDR3. The t cell receptor alpha joining 31 stretch occupies residues 119 to 134 (NARLMFGDGTQLVVKP). Residues 136-275 (IQNPDPAVYQ…LLMTLRLWSS (140 aa)) are t cell receptor alpha constant. The region spanning 154-242 (KSVCLFTDFD…LVEKSFETDT (89 aa)) is the Ig-like C1-type domain. Cysteine 157 and cysteine 207 form a disulfide bridge. Residues asparagine 167, asparagine 201, asparagine 212, and asparagine 248 are each glycosylated (N-linked (GlcNAc...) asparagine). Positions 229–250 (CDVKLVEKSFETDTNLNFQNLS) are connecting peptide. The chain crosses the membrane as a helical span at residues 251 to 273 (VIGFRILLLKVAGFNLLMTLRLW). At 274–275 (SS) the chain is on the cytoplasmic side.

As to quaternary structure, disulfide-linked heterodimer with TRBV25-1*01J2S3*01C2*01 beta chain. The alpha-beta TR associates with the transmembrane signaling CD3 coreceptor proteins to form the TR-CD3 (TCR). The assembly of alpha-beta TR heterodimers with CD3 occurs in the endoplasmic reticulum where a single alpha-beta TR heterodimer associates with one CD3D-CD3E heterodimer, one CD3G-CD3E heterodimer and one CD247 homodimer forming a stable octameric structure. CD3D-CD3E and CD3G-CD3E heterodimers preferentially associate with TR alpha and TR beta chains (via TM domain), respectively. The association of the CD247 homodimer is the last step of TCR assembly in the endoplasmic reticulum and is required for transport to the cell surface. Expressed in MR1-restricted CD8-positive T cells.

Its subcellular location is the cell membrane. Functionally, the alpha chain of TRAV38-2DV8*01J31*01C*01/TRBV25-1*01J2S3*01C2*01 alpha-beta T cell receptor (TR) clonotype that displays pan-cancer cell recognition via the invariant MR1 molecule. On CD8-positive T cell clone MC.7.G5, likely recognizes tumor-specific or -associated metabolite(s) essential for cancer cell survival, triggering killing of many cancer cell types including lung, melanoma, leukemia, colon, breast, prostate, bone and ovarian cancer cells. Mediates cancer cell cytotoxicity in an HLA-independent manner. Has no reactivity to healthy cells, even stressed or infected by bacteria. Antigen recognition initiates TR-CD3 clustering on the cell surface and intracellular activation of LCK that phosphorylates the ITAM motifs of CD3G, CD3D, CD3E and CD247 enabling the recruitment of ZAP70. In turn, ZAP70 phosphorylates LAT, which recruits numerous signaling molecules to form the LAT signalosome. The LAT signalosome propagates signal branching to three major signaling pathways, the calcium, the mitogen-activated protein kinase (MAPK) kinase and the nuclear factor NF-kappa-B (NF-kB) pathways, leading to the mobilization of transcription factors that are critical for gene expression and essential for T cell differentiation into effector/memory T cells. In Homo sapiens (Human), this protein is T cell receptor alpha chain MC.7.G5.